Reading from the N-terminus, the 172-residue chain is Allergen Bos d 2 (172 aa).

The first 16 residues, 1–16, serve as a signal peptide directing secretion; that stretch reads MKAVFLTLLFGLVCTA. Gln-17 is subject to Pyrrolidone carboxylic acid. 2 disulfides stabilise this stretch: Cys-60/Cys-64 and Cys-79/Cys-170.

This sequence belongs to the calycin superfamily. Lipocalin family. In terms of tissue distribution, found exclusively in skin. Produced in sweat glands and transported to the skin surface.

The protein resides in the secreted. In terms of biological role, probable pheromone carrier. This Bos taurus (Bovine) protein is Allergen Bos d 2.